Here is a 221-residue protein sequence, read N- to C-terminus: Carbonic anhydrase (221 aa).

C57, D59, H112, and C115 together coordinate Zn(2+).

Belongs to the beta-class carbonic anhydrase family. The cofactor is Zn(2+).

It localises to the cytoplasm. It is found in the nucleus. The protein resides in the mitochondrion intermembrane space. The enzyme catalyses hydrogencarbonate + H(+) = CO2 + H2O. Catalyzes the reversible hydration of CO(2) to H(2)CO(3). The main role may be to provide inorganic carbon for the bicarbonate-dependent carboxylation reactions catalyzed by pyruvate carboxylase, acetyl-CoA carboxylase and carbamoyl-phosphate synthetase. Involved in protection against oxidative damage. Encodes a substrate for the non-classical protein export pathway for proteins that lack a cleavable signal sequence. In Saccharomyces cerevisiae (strain ATCC 204508 / S288c) (Baker's yeast), this protein is Carbonic anhydrase (NCE103).